The sequence spans 621 residues: Interleukin-1 receptor-associated kinase-like 2 (621 aa).

The Death domain occupies 13-94 (LDDLCRNMDT…RAAQIILNWK (82 aa)). Residues 113 to 175 (GKPLAASVRN…TASADSKDFS (63 aa)) are disordered. Positions 157 to 169 (ASSSLKTNQTASA) are enriched in polar residues. Residues 206-476 (FNPSHKISEG…AEALVMAACL (271 aa)) form the Protein kinase domain. ATP-binding positions include 212 to 220 (ISEGTFADV), Lys233, and 333 to 336 (KSSN). Positions 503-522 (ETSLPCSGLSEGTGSSFNTP) are enriched in polar residues. The tract at residues 503 to 534 (ETSLPCSGLSEGTGSSFNTPEETDDVDNSSFD) is disordered.

Belongs to the protein kinase superfamily. TKL Ser/Thr protein kinase family. Pelle subfamily. In terms of assembly, interacts with MYD88. IL-1 stimulation leads to the formation of a signaling complex which dissociates from the IL-1 receptor following the binding of PELI1.

Its function is as follows. Binds to the IL-1 type I receptor following IL-1 engagement, triggering intracellular signaling cascades leading to transcriptional up-regulation and mRNA stabilization. In Bos taurus (Bovine), this protein is Interleukin-1 receptor-associated kinase-like 2 (IRAK2).